A 301-amino-acid chain; its full sequence is Asialoglycoprotein receptor 2 (301 aa).

The interval 1–43 (MEKDCQDIQQLDSEENDHQLSGDDEHGSHVQDPRIENPHWKGQ) is disordered. Residues 1–58 (MEKDCQDIQQLDSEENDHQLSGDDEHGSHVQDPRIENPHWKGQPLSRPFPQRLCSTFR) are Cytoplasmic-facing. Serine 13 carries the post-translational modification Phosphoserine. The span at 16–39 (NDHQLSGDDEHGSHVQDPRIENPH) shows a compositional bias: basic and acidic residues. Cysteine 54 is lipidated: S-palmitoyl cysteine. Residues 59-79 (LSLLALAFNILLLVVICVVSS) form a helical; Signal-anchor for type II membrane protein membrane-spanning segment. The Extracellular segment spans residues 80-301 (QSIQLQEEFR…VCEKRRNITH (222 aa)). Residues asparagine 97 and asparagine 165 are each glycosylated (N-linked (GlcNAc...) asparagine). The 127-residue stretch at 169 to 295 (CCPVNWVEFG…QQVNRWVCEK (127 aa)) folds into the C-type lectin domain. 3 cysteine pairs are disulfide-bonded: cysteine 170/cysteine 181, cysteine 198/cysteine 293, and cysteine 271/cysteine 285. N-linked (GlcNAc...) asparagine glycosylation is present at asparagine 298.

As to quaternary structure, interacts with LASS2. In terms of tissue distribution, expressed exclusively in hepatic parenchymal cells.

The protein localises to the membrane. Its function is as follows. Mediates the endocytosis of plasma glycoproteins to which the terminal sialic acid residue on their complex carbohydrate moieties has been removed. The receptor recognizes terminal galactose and N-acetylgalactosamine units. After ligand binding to the receptor, the resulting complex is internalized and transported to a sorting organelle, where receptor and ligand are disassociated. The receptor then returns to the cell membrane surface. In Mus musculus (Mouse), this protein is Asialoglycoprotein receptor 2 (Asgr2).